A 564-amino-acid chain; its full sequence is Potassium-transporting ATPase potassium-binding subunit (564 aa).

10 consecutive transmembrane segments (helical) span residues 4-24 (YDYW…PFLG), 67-87 (TLAL…ILLF), 135-155 (VGLT…LVAL), 179-199 (LYGL…QGVP), 258-278 (FEVA…GHYV), 286-306 (AIIG…LWAE), 382-402 (AGLY…GLMI), 420-440 (LLVV…AIAA), 487-507 (LMLG…VLAL), and 528-548 (GPLF…LTFL).

The protein belongs to the KdpA family. The system is composed of three essential subunits: KdpA, KdpB and KdpC.

Its subcellular location is the cell inner membrane. In terms of biological role, part of the high-affinity ATP-driven potassium transport (or Kdp) system, which catalyzes the hydrolysis of ATP coupled with the electrogenic transport of potassium into the cytoplasm. This subunit binds the periplasmic potassium ions and delivers the ions to the membrane domain of KdpB through an intramembrane tunnel. The protein is Potassium-transporting ATPase potassium-binding subunit of Pseudomonas fluorescens (strain Pf0-1).